The chain runs to 282 residues: uncharacterized protein (282 aa).

The region spanning 2–78 is the HTH rpiR-type domain; it reads TDVLAVIREM…IKIAVSLAKQ (77 aa). Positions 38–57 form a DNA-binding region, H-T-H motif; that stretch reads VNELANACDTSEASIIRFCR. The SIS domain maps to 122–262; sequence AAEALANANK…FILVAQKKYN (141 aa).

This is an uncharacterized protein from Caldanaerobacter subterraneus subsp. tengcongensis (strain DSM 15242 / JCM 11007 / NBRC 100824 / MB4) (Thermoanaerobacter tengcongensis).